Reading from the N-terminus, the 283-residue chain is Acetylglutamate kinase (283 aa).

Substrate-binding positions include 63 to 64 (GG), R85, and N178.

Belongs to the acetylglutamate kinase family. ArgB subfamily.

Its subcellular location is the cytoplasm. It carries out the reaction N-acetyl-L-glutamate + ATP = N-acetyl-L-glutamyl 5-phosphate + ADP. Its pathway is amino-acid biosynthesis; L-arginine biosynthesis; N(2)-acetyl-L-ornithine from L-glutamate: step 2/4. In terms of biological role, catalyzes the ATP-dependent phosphorylation of N-acetyl-L-glutamate. This Prochlorococcus marinus (strain MIT 9515) protein is Acetylglutamate kinase.